A 172-amino-acid polypeptide reads, in one-letter code: MAKMQAKVQADERDDGLREKMISVNRVTKVVKGGRILGFAALTVVGDGDGRVGMGKGKAKEVPVAVQKAMEQARRNMFKVPLKNGTLQHEVHGKHGASTVLLAPAKDGTGVIAGGPMRAVFDVMGVQNVVAKSHGSTNPYNLVRATLDGLRKQSTPGDIAAKRGKSVEEILG.

The region spanning 17–80 (LREKMISVNR…EQARRNMFKV (64 aa)) is the S5 DRBM domain.

This sequence belongs to the universal ribosomal protein uS5 family. In terms of assembly, part of the 30S ribosomal subunit. Contacts proteins S4 and S8.

Its function is as follows. With S4 and S12 plays an important role in translational accuracy. In terms of biological role, located at the back of the 30S subunit body where it stabilizes the conformation of the head with respect to the body. The polypeptide is Small ribosomal subunit protein uS5 (Burkholderia thailandensis (strain ATCC 700388 / DSM 13276 / CCUG 48851 / CIP 106301 / E264)).